Consider the following 90-residue polypeptide: uncharacterized protein (90 aa).

A helical membrane pass occupies residues 32 to 52 (IIINLIPLVLLFAFFCPCIYF).

It is found in the membrane. This is an uncharacterized protein from Schizosaccharomyces pombe (strain 972 / ATCC 24843) (Fission yeast).